Reading from the N-terminus, the 328-residue chain is LOB domain-containing protein 27 (328 aa).

The LOB domain occupies 35 to 136; that stretch reads GACAACKYQR…EELKAVNSQL (102 aa).

It belongs to the LOB domain-containing protein family.

The polypeptide is LOB domain-containing protein 27 (LBD27) (Arabidopsis thaliana (Mouse-ear cress)).